We begin with the raw amino-acid sequence, 168 residues long: Large ribosomal subunit protein uL10 (168 aa).

The protein belongs to the universal ribosomal protein uL10 family. As to quaternary structure, part of the ribosomal stalk of the 50S ribosomal subunit. The N-terminus interacts with L11 and the large rRNA to form the base of the stalk. The C-terminus forms an elongated spine to which L12 dimers bind in a sequential fashion forming a multimeric L10(L12)X complex.

Its function is as follows. Forms part of the ribosomal stalk, playing a central role in the interaction of the ribosome with GTP-bound translation factors. This chain is Large ribosomal subunit protein uL10, found in Clostridioides difficile (strain 630) (Peptoclostridium difficile).